A 271-amino-acid polypeptide reads, in one-letter code: ATP synthase subunit a (271 aa).

5 helical membrane-spanning segments follow: residues 40 to 60 (TINI…LVLF), 100 to 120 (LIAP…LMDL), 146 to 166 (DVNV…FYSI), 220 to 240 (LIFI…LNVP), and 242 to 262 (AIFH…LTIV).

Belongs to the ATPase A chain family. F-type ATPases have 2 components, CF(1) - the catalytic core - and CF(0) - the membrane proton channel. CF(1) has five subunits: alpha(3), beta(3), gamma(1), delta(1), epsilon(1). CF(0) has three main subunits: a(1), b(2) and c(9-12). The alpha and beta chains form an alternating ring which encloses part of the gamma chain. CF(1) is attached to CF(0) by a central stalk formed by the gamma and epsilon chains, while a peripheral stalk is formed by the delta and b chains.

The protein localises to the cell inner membrane. Key component of the proton channel; it plays a direct role in the translocation of protons across the membrane. This chain is ATP synthase subunit a, found in Escherichia coli O1:K1 / APEC.